The primary structure comprises 578 residues: GPI-anchor transamidase component PIGT (578 aa).

Positions 1–21 (MAAAMPLALLVLLLLGPGGWC) are cleaved as a signal peptide. The Lumenal portion of the chain corresponds to 22 to 525 (LAEPPRDSLR…NLPTPDFSMP (504 aa)). The N-linked (GlcNAc...) asparagine glycan is linked to Asn-164. Intrachain disulfides connect Cys-195/Cys-272 and Cys-226/Cys-231. N-linked (GlcNAc...) asparagine glycans are attached at residues Asn-291 and Asn-327. A 2-acyl-6-[6-phosphoethanolamine-alpha-D-mannosyl-(1-&gt;2)-6-phosphoethanolamine-alpha-D-mannosyl-(1-&gt;6)-2-phosphoethanolamine-alpha-D-mannosyl-(1-&gt;4)-alpha-D-glucosaminyl]-1-(1-radyl,2-acyl-sn-glycero-3-phospho)-1D-myo-inositol-binding residues include Asn-461, Asp-521, Ser-523, and Asn-527. Residues 526–548 (YNVICLTCTVVAVCYGSFYNLLT) form a helical membrane-spanning segment. The Cytoplasmic segment spans residues 549–578 (RTFHIEEPRTGGLAKRLANLIRRARGVPPL).

The protein belongs to the PIGT family. As to quaternary structure, heteropentamer. Part of the GPI-anchor transamidase complex, consisting of PIGK, PIGT, PIGS, PIGU and GAA1. Post-translationally, the disulfide bond between PIGK/GPI8 and PIGT is important for normal enzyme activity.

It localises to the endoplasmic reticulum membrane. The protein operates within glycolipid biosynthesis; glycosylphosphatidylinositol-anchor biosynthesis. Component of the glycosylphosphatidylinositol-anchor (GPI-anchor) transamidase (GPI-T) complex that catalyzes the formation of the linkage between a proprotein and a GPI-anchor and participates in GPI anchored protein biosynthesis. May play a crucial role in GPI-T complex assembly in the luminal layer. Binds GPI-anchor. This Homo sapiens (Human) protein is GPI-anchor transamidase component PIGT.